We begin with the raw amino-acid sequence, 490 residues long: Cardiolipin synthase 1 (490 aa).

The next 2 membrane-spanning stretches (helical) occupy residues 9–29 (ILTI…FVII) and 42–62 (WAWL…YLFL). PLD phosphodiesterase domains follow at residues 225–252 (MNNR…GDDY) and 403–430 (QNGF…DFRS). Active-site residues include H230, K232, D237, H408, K410, and D415.

This sequence belongs to the phospholipase D family. Cardiolipin synthase subfamily.

It localises to the cell membrane. The enzyme catalyses 2 a 1,2-diacyl-sn-glycero-3-phospho-(1'-sn-glycerol) = a cardiolipin + glycerol. Functionally, catalyzes the reversible phosphatidyl group transfer from one phosphatidylglycerol molecule to another to form cardiolipin (CL) (diphosphatidylglycerol) and glycerol. In Staphylococcus epidermidis (strain ATCC 35984 / DSM 28319 / BCRC 17069 / CCUG 31568 / BM 3577 / RP62A), this protein is Cardiolipin synthase 1 (cls1).